The chain runs to 320 residues: Nucleotide-binding protein Pcryo_0127 (320 aa).

ATP is bound at residue 32-39 (GRSGSGKT). 82-85 (DIRT) serves as a coordination point for GTP.

The protein belongs to the RapZ-like family.

Its function is as follows. Displays ATPase and GTPase activities. The sequence is that of Nucleotide-binding protein Pcryo_0127 from Psychrobacter cryohalolentis (strain ATCC BAA-1226 / DSM 17306 / VKM B-2378 / K5).